Consider the following 628-residue polypeptide: MMKRCFSILPQNVRFSSKFTSLNLPKLDLADFIDSNKRGINVLPSYRDETASTTQATNSKELRLLSKTLQGQSYRDQLELNPDVSKAINNNIMAVHIPNNLRRVATNYYKEIQEPNSLHRPCRTKMEVDAHIASIFLQNYGSIFQSLKELQKRVGPDNFKPQRILDVGYGPATGIVALNDILGPNYRPDLKDAVILGNAEMQERAKIILSRQLNEVVDTVEENVSTEKEQETDRRNKNFQEDEHIGEVMTKKINIMTNLRSSIPASKEYDLIILTHQLLHDGNQFPIQVDENIEHYLNILAPGGHIVIIERGNPMGFEIIARARQITLRPENFPDEFGKIPRPWSRGVTVRGKKDAELGNISSNYFLKVIAPCPHQRKCPLQVGNPNFYTHKEGKDLKFCNFQKSIKRPKFSIELKKGKLLATSWDGSQGNASRLKGTGRRNGRDYEILNYSYLIFERSHKDENTLKEIKKLRNENVNGKYDIGSLGDDTQNSWPRIINDPVKRKGHVMMDLCAPSGELEKWTVSRSFSKQIYHDARKSKKGDLWASAAKTQIKGLGDLNVKKFHKLEKERIKQLKKEERQKARKAMESYNELEDSLQFDDHQFSNFEVMKKLSTFHGNDFLQHVNRK.

Residues 1 to 15 (MMKRCFSILPQNVRF) constitute a mitochondrion transit peptide. Residues cysteine 373, cysteine 379, cysteine 400, and cysteine 513 each coordinate [4Fe-4S] cluster.

Belongs to the methyltransferase superfamily. Rsm22 family. In terms of assembly, associates with the mitochondrial ribosome (mitoribosome). Only transiently interacts with the mitoribosome.

The protein resides in the mitochondrion. In terms of biological role, mitochondrial ribosome (mitoribosome) assembly factor. Binds at the interface of the head and body domains of the mitochondrial small ribosomal subunit (mt-SSU), occluding the mRNA channel and preventing compaction of the head domain towards the body. Probable inactive methyltransferase: retains the characteristic folding and ability to bind S-adenosyl-L-methionine, but it probably lost its methyltransferase activity. This is Ribosome assembly protein RSM22, mitochondrial (RSM22) from Saccharomyces cerevisiae (strain ATCC 204508 / S288c) (Baker's yeast).